A 54-amino-acid chain; its full sequence is Large ribosomal subunit protein bL33 (54 aa).

It belongs to the bacterial ribosomal protein bL33 family.

This chain is Large ribosomal subunit protein bL33, found in Chloroflexus aggregans (strain MD-66 / DSM 9485).